A 585-amino-acid chain; its full sequence is Protein FAM151A (585 aa).

The chain crosses the membrane as a helical span at residues Trp14–Ile34.

It belongs to the menorin family.

Its subcellular location is the membrane. This chain is Protein FAM151A (FAM151A), found in Pongo abelii (Sumatran orangutan).